Here is a 252-residue protein sequence, read N- to C-terminus: Imidazole glycerol phosphate synthase subunit HisF (252 aa).

Catalysis depends on residues Asp-11 and Asp-130.

This sequence belongs to the HisA/HisF family. As to quaternary structure, heterodimer of HisH and HisF.

The protein resides in the cytoplasm. It catalyses the reaction 5-[(5-phospho-1-deoxy-D-ribulos-1-ylimino)methylamino]-1-(5-phospho-beta-D-ribosyl)imidazole-4-carboxamide + L-glutamine = D-erythro-1-(imidazol-4-yl)glycerol 3-phosphate + 5-amino-1-(5-phospho-beta-D-ribosyl)imidazole-4-carboxamide + L-glutamate + H(+). It functions in the pathway amino-acid biosynthesis; L-histidine biosynthesis; L-histidine from 5-phospho-alpha-D-ribose 1-diphosphate: step 5/9. In terms of biological role, IGPS catalyzes the conversion of PRFAR and glutamine to IGP, AICAR and glutamate. The HisF subunit catalyzes the cyclization activity that produces IGP and AICAR from PRFAR using the ammonia provided by the HisH subunit. This Desulforamulus reducens (strain ATCC BAA-1160 / DSM 100696 / MI-1) (Desulfotomaculum reducens) protein is Imidazole glycerol phosphate synthase subunit HisF.